Reading from the N-terminus, the 198-residue chain is Recombination protein RecR (198 aa).

A C4-type zinc finger spans residues cysteine 57–cysteine 72. One can recognise a Toprim domain in the interval serine 80–alanine 175.

This sequence belongs to the RecR family.

In terms of biological role, may play a role in DNA repair. It seems to be involved in an RecBC-independent recombinational process of DNA repair. It may act with RecF and RecO. This Streptococcus agalactiae serotype Ia (strain ATCC 27591 / A909 / CDC SS700) protein is Recombination protein RecR.